The primary structure comprises 121 residues: Glycine cleavage system H protein (121 aa).

The Lipoyl-binding domain maps to 22 to 102; it reads IAWVGITKYA…DSSVWLFKAE (81 aa). Residue lysine 63 is modified to N6-lipoyllysine.

This sequence belongs to the GcvH family. The glycine cleavage system is composed of four proteins: P, T, L and H. (R)-lipoate serves as cofactor.

Functionally, the glycine cleavage system catalyzes the degradation of glycine. The H protein shuttles the methylamine group of glycine from the P protein to the T protein. The sequence is that of Glycine cleavage system H protein from Tropheryma whipplei (strain TW08/27) (Whipple's bacillus).